The following is a 498-amino-acid chain: Aspartyl aminopeptidase (498 aa).

Position 91 (histidine 91) interacts with Zn(2+). Histidine 166 is a substrate binding site. Position 274 (aspartate 274) interacts with Zn(2+). A substrate-binding site is contributed by glutamate 311. Zn(2+) is bound by residues glutamate 312 and aspartate 363. 4 residues coordinate substrate: aspartate 363, histidine 366, lysine 391, and tyrosine 398. Zn(2+) is bound at residue histidine 463.

Belongs to the peptidase M18 family. In terms of assembly, tetrahedron-shaped homododecamer built from six homodimers. Requires Zn(2+) as cofactor. In terms of processing, the N-terminus is blocked.

It catalyses the reaction Release of an N-terminal aspartate or glutamate from a peptide, with a preference for aspartate.. Its activity is regulated as follows. Inhibited by zinc. Stimulated by calcium and bacitracin. The sequence is that of Aspartyl aminopeptidase (dapA) from Aspergillus oryzae (strain ATCC 42149 / RIB 40) (Yellow koji mold).